The primary structure comprises 529 residues: Peptide chain release factor 3 (529 aa).

Positions 11–280 (AKRRTFAIIS…GLVEWAPAPM (270 aa)) constitute a tr-type G domain. GTP is bound by residues 20 to 27 (SHPDAGKT), 88 to 92 (DTPGH), and 142 to 145 (NKLD).

It belongs to the TRAFAC class translation factor GTPase superfamily. Classic translation factor GTPase family. PrfC subfamily.

It localises to the cytoplasm. Functionally, increases the formation of ribosomal termination complexes and stimulates activities of RF-1 and RF-2. It binds guanine nucleotides and has strong preference for UGA stop codons. It may interact directly with the ribosome. The stimulation of RF-1 and RF-2 is significantly reduced by GTP and GDP, but not by GMP. The polypeptide is Peptide chain release factor 3 (Yersinia pseudotuberculosis serotype O:1b (strain IP 31758)).